A 47-amino-acid chain; its full sequence is Delta-actitoxin-Cgg1b (47 aa).

A Hydroxyproline modification is found at P3. Intrachain disulfides connect C4/C44, C6/C34, and C27/C45.

Belongs to the sea anemone sodium channel inhibitory toxin family. Type I subfamily.

It is found in the secreted. It localises to the nematocyst. Its function is as follows. Binds voltage-dependently at site 3 of sodium channels (Nav) and inhibits the inactivation, thereby blocking neuronal transmission. The chain is Delta-actitoxin-Cgg1b from Condylactis gigantea (Giant Caribbean anemone).